The following is a 58-amino-acid chain: Photosystem II reaction center X protein (58 aa).

Residues Ile27–Trp47 traverse the membrane as a helical segment.

Belongs to the PsbX family. Type 2 subfamily. In terms of assembly, PSII consists of a core antenna complex that captures photons, and an electron transfer chain that converts photonic excitation into a charge separation. PSII forms dimeric complexes.

Its subcellular location is the cellular thylakoid membrane. Functionally, involved in the binding and/or turnover of quinones at the Q(B) site of Photosystem II. The sequence is that of Photosystem II reaction center X protein from Prochlorococcus marinus (strain MIT 9211).